A 346-amino-acid polypeptide reads, in one-letter code: tRNA N6-adenosine threonylcarbamoyltransferase (346 aa).

The a divalent metal cation site is built by His120, His124, and Tyr141. Residues 141-145, Asp173, Gly188, Glu192, and Asn277 contribute to the substrate site; that span reads YVSGG. Residue Asp305 coordinates a divalent metal cation.

This sequence belongs to the KAE1 / TsaD family. In terms of assembly, component of the EKC/KEOPS complex composed of at least BUD32, CGI121, GON7, KAE1 and PCC1; the whole complex dimerizes. A divalent metal cation is required as a cofactor.

The protein localises to the cytoplasm. The protein resides in the nucleus. The enzyme catalyses L-threonylcarbamoyladenylate + adenosine(37) in tRNA = N(6)-L-threonylcarbamoyladenosine(37) in tRNA + AMP + H(+). Its function is as follows. Component of the EKC/KEOPS complex that is required for the formation of a threonylcarbamoyl group on adenosine at position 37 (t(6)A37) in tRNAs that read codons beginning with adenine. The complex is probably involved in the transfer of the threonylcarbamoyl moiety of threonylcarbamoyl-AMP (TC-AMP) to the N6 group of A37. KAE1 likely plays a direct catalytic role in this reaction, but requires other protein(s) of the complex to fulfill this activity. The EKC/KEOPS complex also promotes both telomere uncapping and telomere elongation. The complex is required for efficient recruitment of transcriptional coactivators. The polypeptide is tRNA N6-adenosine threonylcarbamoyltransferase (Gibberella zeae (strain ATCC MYA-4620 / CBS 123657 / FGSC 9075 / NRRL 31084 / PH-1) (Wheat head blight fungus)).